The sequence spans 68 residues: Large ribosomal subunit protein bL33c (68 aa).

It belongs to the bacterial ribosomal protein bL33 family.

Its subcellular location is the plastid. The sequence is that of Large ribosomal subunit protein bL33c from Cuscuta reflexa (Southern Asian dodder).